The chain runs to 204 residues: Partner of Y14 and mago (204 aa).

Disordered regions lie at residues 1-121 (MGSR…QSVN) and 133-153 (SSNNDVCGGAPNPGTTGEDVE). Residues 7–36 (EQGKRMAELSKNLKEGERILEPTRRPDGTL) are compositionally biased toward basic and acidic residues. A compositionally biased stretch (polar residues) spans 104-121 (KANSSEDGSASNGSQSVN). The Nuclear export signal motif lies at 195-200 (ELKALE).

Belongs to the pym family. As to quaternary structure, interacts with MAGO and Y14. Expressed in root and shoot meristems, cotyledons, vascular tissues of leaves, receptacle of flowers and siliques, and pollen grains.

It is found in the cytoplasm. Its subcellular location is the nucleus. It localises to the nucleolus. The protein localises to the nucleoplasm. Key regulator of the exon junction complex (EJC), a multiprotein complex that associates immediately upstream of the exon-exon junction on mRNAs and serves as a positional landmark for the intron exon structure of genes and directs post-transcriptional processes in the cytoplasm such as mRNA export, nonsense-mediated mRNA decay (NMD) or translation. Acts as an EJC disassembly factor, allowing translation-dependent EJC removal and recycling by disrupting mature EJC from spliced mRNAs. Can increase in vitro the expression from reporter constructs that contain leader introns required for the expression of different genes. In association with MAGO and PYM, participates in intron-mediated enhancement of gene expression. The sequence is that of Partner of Y14 and mago from Arabidopsis thaliana (Mouse-ear cress).